We begin with the raw amino-acid sequence, 345 residues long: Phosphoribosylformylglycinamidine cyclo-ligase (345 aa).

Belongs to the AIR synthase family.

It is found in the cytoplasm. It catalyses the reaction 2-formamido-N(1)-(5-O-phospho-beta-D-ribosyl)acetamidine + ATP = 5-amino-1-(5-phospho-beta-D-ribosyl)imidazole + ADP + phosphate + H(+). The protein operates within purine metabolism; IMP biosynthesis via de novo pathway; 5-amino-1-(5-phospho-D-ribosyl)imidazole from N(2)-formyl-N(1)-(5-phospho-D-ribosyl)glycinamide: step 2/2. The polypeptide is Phosphoribosylformylglycinamidine cyclo-ligase (Escherichia fergusonii (strain ATCC 35469 / DSM 13698 / CCUG 18766 / IAM 14443 / JCM 21226 / LMG 7866 / NBRC 102419 / NCTC 12128 / CDC 0568-73)).